The following is a 680-amino-acid chain: Methionine--tRNA ligase (680 aa).

The short motif at 15–25 is the 'HIGH' region element; sequence PYANGSIHLGH. Residues cysteine 146, cysteine 149, cysteine 159, and cysteine 162 each coordinate Zn(2+). Positions 332 to 336 match the 'KMSKS' region motif; it reads KMSKS. An ATP-binding site is contributed by lysine 335. The region spanning 579-680 is the tRNA-binding domain; the sequence is DFAKVDMRIA…EGAQPGMRVM (102 aa).

It belongs to the class-I aminoacyl-tRNA synthetase family. MetG type 1 subfamily. As to quaternary structure, homodimer. Zn(2+) is required as a cofactor.

It localises to the cytoplasm. The catalysed reaction is tRNA(Met) + L-methionine + ATP = L-methionyl-tRNA(Met) + AMP + diphosphate. Functionally, is required not only for elongation of protein synthesis but also for the initiation of all mRNA translation through initiator tRNA(fMet) aminoacylation. The chain is Methionine--tRNA ligase from Photobacterium profundum (strain SS9).